The chain runs to 236 residues: 2-C-methyl-D-erythritol 4-phosphate cytidylyltransferase (236 aa).

Belongs to the IspD/TarI cytidylyltransferase family. IspD subfamily. As to quaternary structure, homodimer.

It carries out the reaction 2-C-methyl-D-erythritol 4-phosphate + CTP + H(+) = 4-CDP-2-C-methyl-D-erythritol + diphosphate. The protein operates within isoprenoid biosynthesis; isopentenyl diphosphate biosynthesis via DXP pathway; isopentenyl diphosphate from 1-deoxy-D-xylulose 5-phosphate: step 2/6. Functionally, catalyzes the formation of 4-diphosphocytidyl-2-C-methyl-D-erythritol from CTP and 2-C-methyl-D-erythritol 4-phosphate (MEP). This Cronobacter sakazakii (strain ATCC BAA-894) (Enterobacter sakazakii) protein is 2-C-methyl-D-erythritol 4-phosphate cytidylyltransferase.